Consider the following 204-residue polypeptide: Inactive ribonuclease-like protein 9 (204 aa).

Residues 1–26 (MMRTLITTHPLLLLLLLQQLLQPVQL) form the signal peptide. 3 disulfides stabilise this stretch: cysteine 97-cysteine 152, cysteine 115-cysteine 167, and cysteine 122-cysteine 129. N-linked (GlcNAc...) asparagine glycosylation is found at asparagine 130 and asparagine 142.

Belongs to the pancreatic ribonuclease family.

Its subcellular location is the secreted. In terms of biological role, does not exhibit any ribonuclease activity. This chain is Inactive ribonuclease-like protein 9 (RNASE9), found in Chlorocebus pygerythrus (Vervet monkey).